The following is a 535-amino-acid chain: Probable monogalactosyldiacylglycerol synthase, chloroplastic (535 aa).

The N-terminal 113 residues, 1–113, are a transit peptide targeting the chloroplast; the sequence is MMQHSSSVTQ…KIPLGFASVG (113 aa).

This sequence belongs to the glycosyltransferase 28 family.

The protein localises to the plastid. Its subcellular location is the chloroplast membrane. It catalyses the reaction a 1,2-diacyl-sn-glycerol + UDP-alpha-D-galactose = a 1,2-diacyl-3-O-(beta-D-galactosyl)-sn-glycerol + UDP + H(+). Functionally, involved in the synthesis of the major structural component of photosynthetic membranes. In Nicotiana tabacum (Common tobacco), this protein is Probable monogalactosyldiacylglycerol synthase, chloroplastic (MGD A).